The primary structure comprises 74 residues: MEKLTILLLVAAVLMSTQALIQEQRQKAKINLFSKRKPSAERWWGENDRRVFGSCTADEECCFNNCVQAYCFFV.

A signal peptide spans 1-19; sequence MEKLTILLLVAAVLMSTQA. Residues 20 to 41 constitute a propeptide that is removed on maturation; sequence LIQEQRQKAKINLFSKRKPSAE. Cystine bridges form between cysteine 55–cysteine 66 and cysteine 61–cysteine 71.

The protein belongs to the conotoxin O2 superfamily. In terms of tissue distribution, expressed by the venom duct.

The protein localises to the secreted. Its function is as follows. Inhibits voltage-gated ion channels. This Conus victoriae (Queen Victoria cone) protein is Conotoxin Vc6.11.